Reading from the N-terminus, the 138-residue chain is Basic phospholipase A2 Cll-N6 (138 aa).

The signal sequence occupies residues 1 to 16; sequence MRTFWIVAVLLVGVEG. 7 disulfides stabilise this stretch: C42–C131, C44–C60, C59–C111, C65–C138, C66–C104, C73–C97, and C91–C102. 3 residues coordinate Ca(2+): Y43, G45, and G47. The active site involves H63. Position 64 (D64) interacts with Ca(2+). D105 is an active-site residue.

In terms of assembly, monomer. The cofactor is Ca(2+). Expressed by the venom gland.

It localises to the secreted. The enzyme catalyses a 1,2-diacyl-sn-glycero-3-phosphocholine + H2O = a 1-acyl-sn-glycero-3-phosphocholine + a fatty acid + H(+). Functionally, snake venom phospholipase A2 (PLA2) that shows myotoxic activities. PLA2 catalyzes the calcium-dependent hydrolysis of the 2-acyl groups in 3-sn-phosphoglycerides. This is Basic phospholipase A2 Cll-N6 from Crotalus lepidus lepidus (Mottled rock rattlesnake).